The chain runs to 330 residues: ADP-L-glycero-D-manno-heptose-6-epimerase (330 aa).

Residues 11–12 (FI), 32–33 (DN), lysine 39, lysine 54, 75–79 (EGACS), and asparagine 92 each bind NADP(+). Tyrosine 139 acts as the Proton acceptor in catalysis. Lysine 143 lines the NADP(+) pocket. Asparagine 168 provides a ligand contact to substrate. Valine 169 and lysine 177 together coordinate NADP(+). The active-site Proton acceptor is the lysine 177. Residues arginine 179, histidine 186, 200-203 (FGEY), arginine 213, and tyrosine 292 contribute to the substrate site.

The protein belongs to the NAD(P)-dependent epimerase/dehydratase family. HldD subfamily. In terms of assembly, homopentamer. It depends on NADP(+) as a cofactor.

It catalyses the reaction ADP-D-glycero-beta-D-manno-heptose = ADP-L-glycero-beta-D-manno-heptose. It functions in the pathway nucleotide-sugar biosynthesis; ADP-L-glycero-beta-D-manno-heptose biosynthesis; ADP-L-glycero-beta-D-manno-heptose from D-glycero-beta-D-manno-heptose 7-phosphate: step 4/4. Functionally, catalyzes the interconversion between ADP-D-glycero-beta-D-manno-heptose and ADP-L-glycero-beta-D-manno-heptose via an epimerization at carbon 6 of the heptose. The chain is ADP-L-glycero-D-manno-heptose-6-epimerase from Burkholderia multivorans (strain ATCC 17616 / 249).